The following is a 591-amino-acid chain: Aspartate--tRNA ligase (591 aa).

Glu173 contacts L-aspartate. The segment at 197–200 is aspartate; that stretch reads QLFK. Arg219 lines the L-aspartate pocket. Residues 219–221 and Gln228 contribute to the ATP site; that span reads RDE. An L-aspartate-binding site is contributed by His448. Position 482 (Glu482) interacts with ATP. L-aspartate is bound at residue Arg489. Position 534 to 537 (534 to 537) interacts with ATP; the sequence is GLDR.

It belongs to the class-II aminoacyl-tRNA synthetase family. Type 1 subfamily. In terms of assembly, homodimer.

Its subcellular location is the cytoplasm. The enzyme catalyses tRNA(Asp) + L-aspartate + ATP = L-aspartyl-tRNA(Asp) + AMP + diphosphate. Functionally, catalyzes the attachment of L-aspartate to tRNA(Asp) in a two-step reaction: L-aspartate is first activated by ATP to form Asp-AMP and then transferred to the acceptor end of tRNA(Asp). In Shewanella sp. (strain MR-4), this protein is Aspartate--tRNA ligase.